The chain runs to 359 residues: Membrane-bound lytic murein transglycosylase C (359 aa).

Residues 1 to 16 form the signal peptide; it reads MKKYLALALIAPLLIS. The N-palmitoyl cysteine moiety is linked to residue C17. The S-diacylglycerol cysteine moiety is linked to residue C17.

It belongs to the transglycosylase Slt family.

Its subcellular location is the cell outer membrane. The catalysed reaction is Exolytic cleavage of the (1-&gt;4)-beta-glycosidic linkage between N-acetylmuramic acid (MurNAc) and N-acetylglucosamine (GlcNAc) residues in peptidoglycan, from either the reducing or the non-reducing ends of the peptidoglycan chains, with concomitant formation of a 1,6-anhydrobond in the MurNAc residue.. Functionally, murein-degrading enzyme. May play a role in recycling of muropeptides during cell elongation and/or cell division. In Escherichia coli (strain SE11), this protein is Membrane-bound lytic murein transglycosylase C.